Reading from the N-terminus, the 416-residue chain is UDP-N-acetylglucosamine 1-carboxyvinyltransferase (416 aa).

Lys-22 to Asn-23 contributes to the phosphoenolpyruvate binding site. Arg-92 contributes to the UDP-N-acetyl-alpha-D-glucosamine binding site. Cys-116 (proton donor) is an active-site residue. Cys-116 is modified (2-(S-cysteinyl)pyruvic acid O-phosphothioketal). Residues Arg-121 to Gln-125, Asp-304, and Ile-326 contribute to the UDP-N-acetyl-alpha-D-glucosamine site.

The protein belongs to the EPSP synthase family. MurA subfamily.

The protein localises to the cytoplasm. The enzyme catalyses phosphoenolpyruvate + UDP-N-acetyl-alpha-D-glucosamine = UDP-N-acetyl-3-O-(1-carboxyvinyl)-alpha-D-glucosamine + phosphate. The protein operates within cell wall biogenesis; peptidoglycan biosynthesis. Cell wall formation. Adds enolpyruvyl to UDP-N-acetylglucosamine. This Desulfatibacillum aliphaticivorans protein is UDP-N-acetylglucosamine 1-carboxyvinyltransferase.